The primary structure comprises 609 residues: Interleukin-1 receptor-associated kinase 3 (609 aa).

In terms of domain architecture, Death spans 41–106 (WRGLAERLSN…RAIHLIINYG (66 aa)). Threonine 110 is modified (phosphothreonine). In terms of domain architecture, Protein kinase spans 178 to 463 (FHKDFLIGEG…SSLESTQPSL (286 aa)). ATP-binding positions include 184–192 (IGEGEIFEV), lysine 205, 308–311 (SSAN), and aspartate 324. Residue serine 480 is modified to Phosphoserine.

Belongs to the protein kinase superfamily. TKL Ser/Thr protein kinase family. Pelle subfamily. Monomer. Homodimer. May interact with IRAK4 (when phosphorylated). Interacts (when phosphorylated at Thr-110) with PIN1 (via WW domain) in response to IL33-mediated (but not TLR4 ligand LPS) dendritic cell stimulation. Expressed in inflamed lung macrophages (at protein level). Expressed in dendritic cells (at protein level). Highly expressed in liver and thymus and at lower levels in heart, brain, spleen and kidney.

Its subcellular location is the cytoplasm. It localises to the nucleus. Functionally, putative inactive protein kinase which regulates signaling downstream of immune receptors including IL1R and Toll-like receptors. Inhibits dissociation of IRAK1 and IRAK4 from the Toll-like receptor signaling complex by either inhibiting the phosphorylation of IRAK1 and IRAK4 or stabilizing the receptor complex. Upon IL33-induced lung inflammation, positively regulates expression of IL6, CSF3, CXCL2 and CCL5 mRNAs in dendritic cells. This chain is Interleukin-1 receptor-associated kinase 3, found in Mus musculus (Mouse).